A 149-amino-acid chain; its full sequence is 16.9 kDa class I heat shock protein 3 (149 aa).

The sHSP domain maps to 35-149 (DTAAFANARV…PEVKAIEISG (115 aa)).

Belongs to the small heat shock protein (HSP20) family. In terms of assembly, may form oligomeric structures.

Its subcellular location is the cytoplasm. This is 16.9 kDa class I heat shock protein 3 (HSP16.9C) from Oryza sativa subsp. japonica (Rice).